An 864-amino-acid polypeptide reads, in one-letter code: Leucine--tRNA ligase (864 aa).

The short motif at 42–52 is the 'HIGH' region element; it reads PYPSGKLHMGH. Positions 624–628 match the 'KMSKS' region motif; it reads KMSKS. An ATP-binding site is contributed by lysine 627.

This sequence belongs to the class-I aminoacyl-tRNA synthetase family.

The protein localises to the cytoplasm. The catalysed reaction is tRNA(Leu) + L-leucine + ATP = L-leucyl-tRNA(Leu) + AMP + diphosphate. The sequence is that of Leucine--tRNA ligase from Burkholderia vietnamiensis (strain G4 / LMG 22486) (Burkholderia cepacia (strain R1808)).